We begin with the raw amino-acid sequence, 196 residues long: Holliday junction branch migration complex subunit RuvA (196 aa).

Residues 1-63 (MIASVRGEVL…EDSMTLYGFP (63 aa)) form a domain I region. The interval 64–138 (DGETRDLFLT…DKVGVAATGG (75 aa)) is domain II. The tract at residues 138–142 (GALST) is flexible linker. Positions 143 to 196 (NGHAVRSPVVEALVGLGFAAKQAEEATDTVLAANHDATTSSALRSALSLLGKAR) are domain III.

It belongs to the RuvA family. Homotetramer. Forms an RuvA(8)-RuvB(12)-Holliday junction (HJ) complex. HJ DNA is sandwiched between 2 RuvA tetramers; dsDNA enters through RuvA and exits via RuvB. An RuvB hexamer assembles on each DNA strand where it exits the tetramer. Each RuvB hexamer is contacted by two RuvA subunits (via domain III) on 2 adjacent RuvB subunits; this complex drives branch migration. In the full resolvosome a probable DNA-RuvA(4)-RuvB(12)-RuvC(2) complex forms which resolves the HJ.

The protein localises to the cytoplasm. In terms of biological role, the RuvA-RuvB-RuvC complex processes Holliday junction (HJ) DNA during genetic recombination and DNA repair, while the RuvA-RuvB complex plays an important role in the rescue of blocked DNA replication forks via replication fork reversal (RFR). RuvA specifically binds to HJ cruciform DNA, conferring on it an open structure. The RuvB hexamer acts as an ATP-dependent pump, pulling dsDNA into and through the RuvAB complex. HJ branch migration allows RuvC to scan DNA until it finds its consensus sequence, where it cleaves and resolves the cruciform DNA. This Mycobacterium bovis (strain ATCC BAA-935 / AF2122/97) protein is Holliday junction branch migration complex subunit RuvA.